We begin with the raw amino-acid sequence, 298 residues long: tRNA pseudouridine synthase B (298 aa).

The Nucleophile role is filled by Asp45.

Belongs to the pseudouridine synthase TruB family. Type 1 subfamily.

The enzyme catalyses uridine(55) in tRNA = pseudouridine(55) in tRNA. Functionally, responsible for synthesis of pseudouridine from uracil-55 in the psi GC loop of transfer RNAs. The polypeptide is tRNA pseudouridine synthase B (Thiobacillus denitrificans (strain ATCC 25259 / T1)).